The sequence spans 465 residues: Ribulose bisphosphate carboxylase large chain (465 aa).

K4 is subject to N6,N6,N6-trimethyllysine. Residues N113 and T163 each contribute to the substrate site. The active-site Proton acceptor is the K165. Residue K167 coordinates substrate. Mg(2+) is bound by residues K191, D193, and E194. At K191 the chain carries N6-carboxylysine. H284 acts as the Proton acceptor in catalysis. 3 residues coordinate substrate: R285, H317, and S369.

It belongs to the RuBisCO large chain family. Type I subfamily. Heterohexadecamer of 8 large chains and 8 small chains; disulfide-linked. The disulfide link is formed within the large subunit homodimers. It depends on Mg(2+) as a cofactor. In terms of processing, the disulfide bond which can form in the large chain dimeric partners within the hexadecamer appears to be associated with oxidative stress and protein turnover.

The protein resides in the plastid. The protein localises to the chloroplast. The enzyme catalyses 2 (2R)-3-phosphoglycerate + 2 H(+) = D-ribulose 1,5-bisphosphate + CO2 + H2O. It catalyses the reaction D-ribulose 1,5-bisphosphate + O2 = 2-phosphoglycolate + (2R)-3-phosphoglycerate + 2 H(+). Functionally, ruBisCO catalyzes two reactions: the carboxylation of D-ribulose 1,5-bisphosphate, the primary event in carbon dioxide fixation, as well as the oxidative fragmentation of the pentose substrate in the photorespiration process. Both reactions occur simultaneously and in competition at the same active site. In Morella cerifera (Wax myrtle), this protein is Ribulose bisphosphate carboxylase large chain.